The following is a 462-amino-acid chain: Argininosuccinate lyase (462 aa).

It belongs to the lyase 1 family. Argininosuccinate lyase subfamily.

The protein localises to the cytoplasm. The enzyme catalyses 2-(N(omega)-L-arginino)succinate = fumarate + L-arginine. The protein operates within amino-acid biosynthesis; L-arginine biosynthesis; L-arginine from L-ornithine and carbamoyl phosphate: step 3/3. This is Argininosuccinate lyase from Methylobacterium sp. (strain 4-46).